A 466-amino-acid polypeptide reads, in one-letter code: Soluble pyridine nucleotide transhydrogenase (466 aa).

Glu-36–Cys-45 lines the FAD pocket.

Belongs to the class-I pyridine nucleotide-disulfide oxidoreductase family. It depends on FAD as a cofactor.

It is found in the cytoplasm. It carries out the reaction NAD(+) + NADPH = NADH + NADP(+). Its function is as follows. Conversion of NADPH, generated by peripheral catabolic pathways, to NADH, which can enter the respiratory chain for energy generation. In Salmonella gallinarum (strain 287/91 / NCTC 13346), this protein is Soluble pyridine nucleotide transhydrogenase.